The primary structure comprises 690 residues: Putative glycerophosphocholine phosphodiesterase GPCPD1 homolog 1 (690 aa).

A CBM20 domain is found at Met-1 to Ser-122. The 311-residue stretch at Met-344 to Lys-654 folds into the GP-PDE domain. Residues Ala-670–Glu-690 form a disordered region. The segment covering Ser-676–Glu-690 has biased composition (low complexity).

This sequence belongs to the glycerophosphoryl diester phosphodiesterase family.

This Caenorhabditis elegans protein is Putative glycerophosphocholine phosphodiesterase GPCPD1 homolog 1.